A 130-amino-acid chain; its full sequence is Protachykinin-1 (130 aa).

Positions 1–19 (MKILVAVAVFFLVSTQLSA) are cleaved as a signal peptide. Positions 20 to 56 (EEIGANDDLNYWSDWSDSDQIKEALPEPFEHILQRIA) are excised as a propeptide. A methionine amide mark is found at methionine 68 and methionine 107.

Belongs to the tachykinin family. The substance P form is cleaved at Pro-59 by the prolyl endopeptidase FAP (seprase) activity (in vitro). Substance P is also cleaved and degraded by Angiotensin-converting enzyme (ACE) and neprilysin (MME).

The protein resides in the secreted. In terms of biological role, tachykinins are active peptides which excite neurons, evoke behavioral responses, are potent vasodilators and secretagogues, and contract (directly or indirectly) many smooth muscles. The chain is Protachykinin-1 (TAC1) from Mesocricetus auratus (Golden hamster).